A 474-amino-acid polypeptide reads, in one-letter code: PRAME family member 7 (474 aa).

An LRR 1; degenerate repeat occupies 97-122 (QSKLQVLDLRNVDENFCDIFSGATAS). The LRR 2; degenerate repeat unit spans residues 177–201 (HVCCKELQVFGMPIHSIIEVLNMVE). Residues 202–228 (LDCIQEVEVCCPWELSTLVKFAPYLGQ) form an LRR 3; degenerate repeat. Residues 229–264 (MRNLRKLVLFNIRASACIPPDNKGQFIARFTSQFLK) form an LRR 4; degenerate repeat. 5 LRR repeats span residues 265–290 (LDYFQNLSMHSVSFLEGHLDQLLRCL), 291–322 (QASLEMVVMTDCLLSESDLKHLSWCPSIRQLK), 323–341 (ELDLRGVTLTHFSPEPLTG), 347–374 (VATLQTLDLEDCGIMDSQLSAILPVLSR), and 375–399 (CSQLSTFSFCGNLISMAALENLLRH).

It belongs to the PRAME family.

This Homo sapiens (Human) protein is PRAME family member 7.